Reading from the N-terminus, the 876-residue chain is MAP7 domain-containing protein 3 (876 aa).

Methionine 1 is subject to N-acetylmethionine. A coiled-coil region spans residues 65-144 (NDIKQRLARE…DEAQKEKFTA (80 aa)). 2 disordered regions span residues 72–137 (ARER…KDEA) and 170–246 (AMAN…KPRV). Residues 171–183 (MANSESKTANKRS) show a composition bias toward polar residues. At serine 185 the chain carries Phosphoserine. Polar residues predominate over residues 191–211 (QGTSALIRQMPLSSAGLQNSV). The segment covering 214-244 (RKTDKERSSSLNRRDSNLHSSTDKEQAERKP) has biased composition (basic and acidic residues). Serine 322 is modified (phosphoserine). The disordered stretch occupies residues 407-475 (EAAPEGSLEA…ARDAPKKSEM (69 aa)). The segment covering 425–438 (APKESVKGSPKESM) has biased composition (basic and acidic residues). Serine 441, serine 457, and serine 461 each carry phosphoserine. Positions 465 to 475 (KARDAPKKSEM) are enriched in basic and acidic residues. At serine 490 the chain carries Phosphoserine. Disordered stretches follow at residues 509–533 (SPIS…SKQS), 613–697 (QREK…KKEH), and 723–754 (RKTD…SDKD). A compositionally biased stretch (polar residues) spans 510 to 521 (PISTNRQIQKNC). Serine 524 is subject to Phosphoserine. 2 coiled-coil regions span residues 558-640 (VKKK…MAKE) and 689-724 (EADK…RTRK). Basic and acidic residues-rich tracts occupy residues 613 to 639 (QREK…DMAK) and 680 to 697 (GDAK…KKEH). The segment covering 742-752 (EEAEADNEESD) has biased composition (acidic residues). Phosphoserine is present on residues serine 770 and serine 817. The interval 802-876 (PKTYFNGDLK…LPKSSDTFRQ (75 aa)) is disordered. Positions 820–830 (DTSIQEVVSRP) are enriched in polar residues. Residues 831 to 842 (SSKRMTSHTTKT) show a composition bias toward basic residues. A Phosphoserine modification is found at serine 832. Residues 848–860 (TNTTSRSSAQTKS) are compositionally biased toward polar residues. Residues 861–876 (EGFHDILPKSSDTFRQ) are compositionally biased toward basic and acidic residues.

It belongs to the MAP7 family. In terms of assembly, interacts (via N-terminus coiled coil domains) with tubulin and microtubules.

It localises to the cytoplasm. It is found in the cytoskeleton. The protein localises to the spindle. In terms of biological role, promotes the assembly and stability of microtubules. This is MAP7 domain-containing protein 3 (MAP7D3) from Homo sapiens (Human).